The chain runs to 346 residues: Ion-translocating oxidoreductase complex subunit D (346 aa).

4 consecutive transmembrane segments (helical) span residues 20–40 (IMIQVMLACLPGLMALTTFFG), 42–62 (GIIIQLVIACVTALVAEGVVL), 69–91 (LASRLGDGSALLTALLLALSLPP), and 120–140 (PFNPAMVGYVVLLISFPVQMT). Residue T187 is modified to FMN phosphoryl threonine. The next 5 membrane-spanning stretches (helical) occupy residues 212–232 (ASAGWTWANIGFLLGGLYLIW), 242–262 (LSLLAAMLIGAGLGHWLAPVV), 264–284 (APPLLHLFSGATMLGAFFIAT), 290–310 (AATVRGRVIFGALTGLLVWLI), and 314–334 (GGYPDGVAFAVLLANICVPLI).

The protein belongs to the NqrB/RnfD family. In terms of assembly, the complex is composed of six subunits: RnfA, RnfB, RnfC, RnfD, RnfE and RnfG. FMN is required as a cofactor.

It localises to the cell inner membrane. Functionally, part of a membrane-bound complex that couples electron transfer with translocation of ions across the membrane. The sequence is that of Ion-translocating oxidoreductase complex subunit D from Sodalis glossinidius (strain morsitans).